Here is a 257-residue protein sequence, read N- to C-terminus: Gamma-secretase subunit APH-1B (257 aa).

A run of 7 helical transmembrane segments spans residues 5 to 25, 32 to 52, 70 to 90, 115 to 135, 158 to 178, 186 to 206, and 213 to 233; these read VFFG…VFTI, IIFL…SSLV, YLLI…RFAY, LLAY…SFVN, YSAF…IVFF, WGIL…TFIS, and LASA…AAGG.

The protein belongs to the APH-1 family. In terms of assembly, probable component of the gamma-secretase complex, a complex composed of a presenilin homodimer (PSEN1 or PSEN2), nicastrin (NCSTN), APH1 (APH1A or APH1B) and PEN2. Such minimal complex is sufficient for secretase activity, although other components may exist. Interacts with PSEN1 and PSEN2.

It is found in the membrane. Probable subunit of the gamma-secretase complex, an endoprotease complex that catalyzes the intramembrane cleavage of integral proteins such as Notch receptors and APP (amyloid-beta precursor protein). It probably represents a stabilizing cofactor for the presenilin homodimer that promotes the formation of a stable complex. Probably present in a minority of gamma-secretase complexes compared to APH1A. The protein is Gamma-secretase subunit APH-1B (APH1B) of Pongo abelii (Sumatran orangutan).